The chain runs to 292 residues: Pyridoxal 5'-phosphate synthase subunit PdxS (292 aa).

Residue Asp22 coordinates D-ribose 5-phosphate. Residue Lys79 is the Schiff-base intermediate with D-ribose 5-phosphate of the active site. D-ribose 5-phosphate is bound at residue Gly151. Arg163 is a binding site for D-glyceraldehyde 3-phosphate. D-ribose 5-phosphate contacts are provided by residues Gly212 and 233-234 (GS).

This sequence belongs to the PdxS/SNZ family. As to quaternary structure, in the presence of PdxT, forms a dodecamer of heterodimers.

It carries out the reaction aldehydo-D-ribose 5-phosphate + D-glyceraldehyde 3-phosphate + L-glutamine = pyridoxal 5'-phosphate + L-glutamate + phosphate + 3 H2O + H(+). It functions in the pathway cofactor biosynthesis; pyridoxal 5'-phosphate biosynthesis. In terms of biological role, catalyzes the formation of pyridoxal 5'-phosphate from ribose 5-phosphate (RBP), glyceraldehyde 3-phosphate (G3P) and ammonia. The ammonia is provided by the PdxT subunit. Can also use ribulose 5-phosphate and dihydroxyacetone phosphate as substrates, resulting from enzyme-catalyzed isomerization of RBP and G3P, respectively. The chain is Pyridoxal 5'-phosphate synthase subunit PdxS from Thermoanaerobacter sp. (strain X514).